Consider the following 38-residue polypeptide: Large ribosomal subunit protein bL36 (38 aa).

It belongs to the bacterial ribosomal protein bL36 family.

The protein is Large ribosomal subunit protein bL36 of Fervidobacterium nodosum (strain ATCC 35602 / DSM 5306 / Rt17-B1).